A 719-amino-acid polypeptide reads, in one-letter code: Pesticidal crystal protein Cry1Ib (719 aa).

Belongs to the delta endotoxin family.

Promotes colloidosmotic lysis by binding to the midgut epithelial cells of certain coleopteran and lepidopteran species. Active on Plutella xylostella but not on Bombyx mori. The polypeptide is Pesticidal crystal protein Cry1Ib (cry1Ib) (Bacillus thuringiensis subsp. entomocidus).